Reading from the N-terminus, the 562-residue chain is Potassium-transporting ATPase potassium-binding subunit (562 aa).

Transmembrane regions (helical) follow at residues 6 to 26, 63 to 83, 132 to 152, 175 to 195, 253 to 273, 283 to 303, 327 to 347, 356 to 376, 379 to 399, 416 to 436, 483 to 503, and 526 to 546; these read FLLI…LGSF, ALAI…LLMM, GLTV…FALI, LYVL…QGVL, FVQM…FGQV, LIWA…YAEL, FGIL…CGAV, ALGG…FGGV, GLYG…LMIG, MTAL…ALAL, LLLA…VLAI, and LFIG…FIPA.

Belongs to the KdpA family. In terms of assembly, the system is composed of three essential subunits: KdpA, KdpB and KdpC.

It localises to the cell inner membrane. Functionally, part of the high-affinity ATP-driven potassium transport (or Kdp) system, which catalyzes the hydrolysis of ATP coupled with the electrogenic transport of potassium into the cytoplasm. This subunit binds the periplasmic potassium ions and delivers the ions to the membrane domain of KdpB through an intramembrane tunnel. The sequence is that of Potassium-transporting ATPase potassium-binding subunit from Yersinia enterocolitica serotype O:8 / biotype 1B (strain NCTC 13174 / 8081).